The chain runs to 245 residues: 8-amino-3,8-dideoxy-manno-octulosonate cytidylyltransferase (245 aa).

It belongs to the KdsB family.

It is found in the cytoplasm. It carries out the reaction 8-amino-3,8-dideoxy-alpha-D-manno-octulosonate + CTP = CMP-8-amino-3,8-dideoxy-alpha-D-manno-oct-2-ulosonate + diphosphate. The protein operates within bacterial outer membrane biogenesis; lipopolysaccharide biosynthesis. Functionally, activates KDO8N (a required 8-carbon sugar) for incorporation into bacterial lipopolysaccharide in the Shewanella genus. The protein is 8-amino-3,8-dideoxy-manno-octulosonate cytidylyltransferase of Shewanella putrefaciens (strain CN-32 / ATCC BAA-453).